Reading from the N-terminus, the 327-residue chain is Elongation factor P--(R)-beta-lysine ligase (327 aa).

78 to 80 (SPE) contributes to the substrate binding site. Residues 102 to 104 (RNQ) and Asn111 each bind ATP. Tyr120 is a substrate binding site. ATP is bound at residue 246 to 247 (EL). Glu253 provides a ligand contact to substrate. Gly302 is a binding site for ATP.

It belongs to the class-II aminoacyl-tRNA synthetase family. EpmA subfamily. Homodimer.

The catalysed reaction is D-beta-lysine + L-lysyl-[protein] + ATP = N(6)-((3R)-3,6-diaminohexanoyl)-L-lysyl-[protein] + AMP + diphosphate + H(+). Functionally, with EpmB is involved in the beta-lysylation step of the post-translational modification of translation elongation factor P (EF-P). Catalyzes the ATP-dependent activation of (R)-beta-lysine produced by EpmB, forming a lysyl-adenylate, from which the beta-lysyl moiety is then transferred to the epsilon-amino group of a conserved specific lysine residue in EF-P. The protein is Elongation factor P--(R)-beta-lysine ligase of Baumannia cicadellinicola subsp. Homalodisca coagulata.